The following is a 531-amino-acid chain: Peptide chain release factor 3 (531 aa).

The tr-type G domain maps to 13–282 (AKRRTFAIIS…TLIEHAPPPK (270 aa)). Residues 22 to 29 (SHPDAGKT), 90 to 94 (DTPGH), and 144 to 147 (NKLD) contribute to the GTP site.

It belongs to the TRAFAC class translation factor GTPase superfamily. Classic translation factor GTPase family. PrfC subfamily.

The protein resides in the cytoplasm. Increases the formation of ribosomal termination complexes and stimulates activities of RF-1 and RF-2. It binds guanine nucleotides and has strong preference for UGA stop codons. It may interact directly with the ribosome. The stimulation of RF-1 and RF-2 is significantly reduced by GTP and GDP, but not by GMP. This chain is Peptide chain release factor 3, found in Psychrobacter sp. (strain PRwf-1).